The sequence spans 420 residues: MAFCGPRTAARLSHSTRALHYTHRGHVSQRTLNEVVIASAARTPIGSFQGSLSSLPATKLGSIAIKAAVERAGIPGDEVKEVYMGNVLQAGQGQAPSRQATLGAGLAISTPTTTINKVCASGMKSIMLAAQSLMCGHQQVMVAGGMESMSNVPYCMSRGATPYGGVKLEDIIVKDGLTDVYNKFHMGNCAENTAKKLSISREEQDSFAINSYTRSKAAWDSGLIANEIVSVTISQKGRPDIIVQEDEEYKRVDFSKFSKLKTVFQKDNGTVTAANASTLNDGAAALVLMTAGAASRLNVTPLARIVAFADAAVDPIDFPIAPAYAVPKLLSEAGLKKEDIAMWEINEAFSVVVLANVKMLDIDPARVNVNGGAVSLGHPIGMSGARIVGHMAHVLKKGQFGIAGICNGGGGASAVLIEKL.

The transit peptide at 1 to 33 directs the protein to the mitochondrion; the sequence is MAFCGPRTAARLSHSTRALHYTHRGHVSQRTLN. The Acyl-thioester intermediate role is filled by cysteine 119. CoA-binding positions include tyrosine 212, 251–253, and lysine 256; that span reads RVD. Tyrosine 212 provides a ligand contact to K(+). K(+)-binding residues include alanine 273, alanine 274, and alanine 276. Position 277 (serine 277) interacts with CoA. K(+) is bound at residue valine 374. Residue cysteine 406 is the Proton donor/acceptor of the active site.

This sequence belongs to the thiolase-like superfamily. Thiolase family. As to quaternary structure, homotetramer.

The protein resides in the mitochondrion. It carries out the reaction 2 acetyl-CoA = acetoacetyl-CoA + CoA. The catalysed reaction is propanoyl-CoA + acetyl-CoA = 2-methyl-3-oxobutanoyl-CoA + CoA. It participates in lipid metabolism; fatty acid beta-oxidation. In terms of biological role, this is one of the enzymes that catalyzes the last step of the mitochondrial beta-oxidation pathway, an aerobic process breaking down fatty acids into acetyl-CoA. Using free coenzyme A/CoA, catalyzes the thiolytic cleavage of medium- to long-chain 3-oxoacyl-CoAs into acetyl-CoA and a fatty acyl-CoA shortened by two carbon atoms. The activity of the enzyme is reversible and it can also catalyze the condensation of two acetyl-CoA molecules into acetoacetyl-CoA. Thereby, it plays a major role in ketone body metabolism. The protein is Acetyl-CoA acetyltransferase, mitochondrial (acat1) of Xenopus tropicalis (Western clawed frog).